We begin with the raw amino-acid sequence, 440 residues long: Enolase (440 aa).

Residue Gln163 participates in (2R)-2-phosphoglycerate binding. Glu205 functions as the Proton donor in the catalytic mechanism. Mg(2+)-binding residues include Asp242, Glu288, and Asp315. Lys340, Arg369, Ser370, and Lys391 together coordinate (2R)-2-phosphoglycerate. Lys340 acts as the Proton acceptor in catalysis.

This sequence belongs to the enolase family. Mg(2+) is required as a cofactor.

The protein localises to the cytoplasm. The protein resides in the secreted. Its subcellular location is the cell surface. It catalyses the reaction (2R)-2-phosphoglycerate = phosphoenolpyruvate + H2O. The protein operates within carbohydrate degradation; glycolysis; pyruvate from D-glyceraldehyde 3-phosphate: step 4/5. Functionally, catalyzes the reversible conversion of 2-phosphoglycerate (2-PG) into phosphoenolpyruvate (PEP). It is essential for the degradation of carbohydrates via glycolysis. The protein is Enolase of Limosilactobacillus fermentum (strain NBRC 3956 / LMG 18251) (Lactobacillus fermentum).